The following is a 589-amino-acid chain: Phenylalanine--tRNA ligase beta subunit (589 aa).

The B5 domain occupies 302-379 (LAYRKEMVRA…IAYGYSNIQM (78 aa)). D357, D363, E366, and D367 together coordinate Mg(2+).

It belongs to the phenylalanyl-tRNA synthetase beta subunit family. Type 2 subfamily. As to quaternary structure, heterotetramer; dimer of two heterodimers formed by FARSA and FARSB. The cofactor is Mg(2+).

It localises to the cytoplasm. The enzyme catalyses tRNA(Phe) + L-phenylalanine + ATP = L-phenylalanyl-tRNA(Phe) + AMP + diphosphate + H(+). This chain is Phenylalanine--tRNA ligase beta subunit (FARSB), found in Pongo abelii (Sumatran orangutan).